Reading from the N-terminus, the 94-residue chain is Integration host factor subunit beta (94 aa).

This sequence belongs to the bacterial histone-like protein family. Heterodimer of an alpha and a beta chain.

Its function is as follows. This protein is one of the two subunits of integration host factor, a specific DNA-binding protein that functions in genetic recombination as well as in transcriptional and translational control. This chain is Integration host factor subunit beta, found in Brucella abortus (strain S19).